We begin with the raw amino-acid sequence, 652 residues long: Threonine--tRNA ligase (652 aa).

The TGS domain occupies 1 to 63 (MAEISLTFPD…TESGDFQLIT (63 aa)). Residues 246–545 (DHRVIGRDLD…LIEMYKGAFP (300 aa)) are catalytic. 3 residues coordinate Zn(2+): Cys340, His391, and His522.

This sequence belongs to the class-II aminoacyl-tRNA synthetase family. As to quaternary structure, homodimer. Zn(2+) is required as a cofactor.

Its subcellular location is the cytoplasm. It carries out the reaction tRNA(Thr) + L-threonine + ATP = L-threonyl-tRNA(Thr) + AMP + diphosphate + H(+). Catalyzes the attachment of threonine to tRNA(Thr) in a two-step reaction: L-threonine is first activated by ATP to form Thr-AMP and then transferred to the acceptor end of tRNA(Thr). Also edits incorrectly charged L-seryl-tRNA(Thr). This is Threonine--tRNA ligase from Leuconostoc mesenteroides subsp. mesenteroides (strain ATCC 8293 / DSM 20343 / BCRC 11652 / CCM 1803 / JCM 6124 / NCDO 523 / NBRC 100496 / NCIMB 8023 / NCTC 12954 / NRRL B-1118 / 37Y).